Consider the following 499-residue polypeptide: Aprataxin and PNK-like factor (499 aa).

An FHA-like domain is found at 1-108 (MPSDFFLQPL…RVFSAESEVE (108 aa)). A Phosphoserine; by ATM modification is found at Ser116. Disordered regions lie at residues 134 to 183 (VNLP…TQRK), 197 to 292 (DQSL…KTNK), and 305 to 358 (VSKH…DTAD). Over residues 141–152 (TGASQLQGSPEI) the composition is skewed to polar residues. Residue Ser149 is modified to Phosphoserine. The short motif at 182-191 (RKRILPAWML) is the KBM element. A compositionally biased stretch (polar residues) spans 239–248 (PSGNSKSVSA). Over residues 251 to 261 (DPGKKCRKADQ) the composition is skewed to basic and acidic residues. Positions 264 to 278 (PGVSSENVPESSSSN) are enriched in low complexity. The segment covering 281 to 292 (KDPDVDIVKTNK) has biased composition (basic and acidic residues). Residues 340–349 (PESSSAPSSP) show a composition bias toward low complexity. Residues Arg371, Tyr376, Tyr381, and Arg382 each coordinate a glycoprotein. The PBZ-type 1 zinc finger occupies 372 to 393 (TACMYGANCYRRNPLHFQHFSH). The flexible linker stretch occupies residues 401–411 (EVHGTDEGVIG). A PBZ-type 2 zinc finger spans residues 414-435 (PECPYGASCYRKNPQHKMEYRH). Tyr418, Tyr423, and Arg424 together coordinate a glycoprotein. Residues 440 to 499 (ARVALDEDDDDVGQPSDDEDEEDYEPTDEDSDWHPGKDDEEQEDVDELLKEAKSSLHLKH) form a disordered region. Residues 445 to 470 (DEDDDDVGQPSDDEDEEDYEPTDEDS) are compositionally biased toward acidic residues. The short motif at 463–487 (YEPTDEDSDWHPGKDDEEQEDVDEL) is the NAP1L motif element.

The protein belongs to the APLF family. Interacts with LIG4. Interacts with PARP1. Interacts with XRCC4. Interacts (via KBM motif) with XRCC5 and XRCC6; promoting recruitment to DNA damage sites. Interacts with XRCC1. Interacts (via C-terminal disordered region) with histones; interacts with histone H2A, H2B and H3-H4. Post-translationally, poly-ADP-ribosylated. In addition to binding non covalently poly-ADP-ribose via its PBZ-type zinc fingers, the protein is also covalently poly-ADP-ribosylated by PARP1. Phosphorylated in an ATM-dependent manner upon double-strand DNA break.

The protein localises to the nucleus. Its subcellular location is the chromosome. The protein resides in the cytoplasm. It is found in the cytosol. In terms of biological role, histone chaperone involved in single-strand and double-strand DNA break repair. Recruited to sites of DNA damage through interaction with branched poly-ADP-ribose chains, a polymeric post-translational modification synthesized transiently at sites of chromosomal damage to accelerate DNA strand break repair reactions. Following recruitment to DNA damage sites, acts as a histone chaperone that mediates histone eviction during DNA repair and promotes recruitment of histone variant MACROH2A1. Also has a nuclease activity: displays apurinic-apyrimidinic (AP) endonuclease and 3'-5' exonuclease activities in vitro. Also able to introduce nicks at hydroxyuracil and other types of pyrimidine base damage. Together with PARP3, promotes the retention of the LIG4-XRCC4 complex on chromatin and accelerate DNA ligation during non-homologous end-joining (NHEJ). Also acts as a negative regulator of cell pluripotency by promoting histone exchange. Required for the embryo implantation during the epithelial to mesenchymal transition in females. The protein is Aprataxin and PNK-like factor (Aplf) of Mus musculus (Mouse).